The chain runs to 201 residues: Ribonuclease HII (201 aa).

The RNase H type-2 domain maps to 10 to 200 (LIEAGCDEAG…LGDGQLELFS (191 aa)). Residues D16, E17, and D108 each coordinate a divalent metal cation.

This sequence belongs to the RNase HII family. The cofactor is Mn(2+). Mg(2+) is required as a cofactor.

Its subcellular location is the cytoplasm. It carries out the reaction Endonucleolytic cleavage to 5'-phosphomonoester.. Endonuclease that specifically degrades the RNA of RNA-DNA hybrids. The polypeptide is Ribonuclease HII (Bacteroides fragilis (strain ATCC 25285 / DSM 2151 / CCUG 4856 / JCM 11019 / LMG 10263 / NCTC 9343 / Onslow / VPI 2553 / EN-2)).